The primary structure comprises 409 residues: Peptidase T (409 aa).

H78 is a binding site for Zn(2+). Residue D80 is part of the active site. Zn(2+) is bound at residue D140. E173 functions as the Proton acceptor in the catalytic mechanism. 3 residues coordinate Zn(2+): E174, D196, and H379.

The protein belongs to the peptidase M20B family. Zn(2+) serves as cofactor.

The protein resides in the cytoplasm. The enzyme catalyses Release of the N-terminal residue from a tripeptide.. In terms of biological role, cleaves the N-terminal amino acid of tripeptides. This chain is Peptidase T, found in Salmonella dublin (strain CT_02021853).